The primary structure comprises 134 residues: Phosphoribosyl-AMP cyclohydrolase (134 aa).

Asp-80 serves as a coordination point for Mg(2+). Cys-81 contacts Zn(2+). Positions 82 and 84 each coordinate Mg(2+). 2 residues coordinate Zn(2+): Cys-98 and Cys-105.

Belongs to the PRA-CH family. Homodimer. It depends on Mg(2+) as a cofactor. Requires Zn(2+) as cofactor.

The protein localises to the cytoplasm. It catalyses the reaction 1-(5-phospho-beta-D-ribosyl)-5'-AMP + H2O = 1-(5-phospho-beta-D-ribosyl)-5-[(5-phospho-beta-D-ribosylamino)methylideneamino]imidazole-4-carboxamide. It functions in the pathway amino-acid biosynthesis; L-histidine biosynthesis; L-histidine from 5-phospho-alpha-D-ribose 1-diphosphate: step 3/9. Catalyzes the hydrolysis of the adenine ring of phosphoribosyl-AMP. The polypeptide is Phosphoribosyl-AMP cyclohydrolase (Bordetella bronchiseptica (strain ATCC BAA-588 / NCTC 13252 / RB50) (Alcaligenes bronchisepticus)).